Here is a 953-residue protein sequence, read N- to C-terminus: Vacuolar membrane protease (953 aa).

At 1 to 16 (MDQTKPPRRNPLAFTP) the chain is on the cytoplasmic side. A helical transmembrane segment spans residues 17–37 (WPVTLITAVVYLAFVIPLLVI). The Vacuolar segment spans residues 38–382 (HHVVPSAPTS…TFVLFRLHTL (345 aa)). Residues Asn-53 and Asn-115 are each glycosylated (N-linked (GlcNAc...) asparagine). The Zn(2+) site is built by His-165 and Asp-177. Glu-211 functions as the Proton acceptor in the catalytic mechanism. Positions 212, 237, and 310 each coordinate Zn(2+). The helical transmembrane segment at 383–403 (FALSVTLLVVAPIVLLLTSII) threads the bilayer. The Cytoplasmic portion of the chain corresponds to 404–437 (LTKVDKMYLFRTSIRPEGSLEVLPLYGDRGVIRY). Residues 438 to 458 (PFLLGIPTAVTIGLAYLLTKF) traverse the membrane as a helical segment. The Vacuolar segment spans residues 459 to 464 (NPYIVH). Residues 465–485 (SSQYAVWSMMVSVWIFLAWFV) form a helical membrane-spanning segment. At 486–499 (SRVADFARPSAFHR) the chain is on the cytoplasmic side. Residues 500–520 (VYTLTWTFVVMWVLQVIATVY) form a helical membrane-spanning segment. At 521–524 (QDRW) the chain is on the vacuolar side. A helical transmembrane segment spans residues 525-545 (ALGGSYFIFFAYAGTFLATWI). Residues 546 to 650 (SYLELFALPR…SLPKWLWLLQ (105 aa)) are Cytoplasmic-facing. Residues 570-599 (ASSHSSRRGLSEEDEEDEDEAPTESTSLLG) form a disordered region. Positions 581 to 591 (EEDEEDEDEAP) are enriched in acidic residues. A helical membrane pass occupies residues 651–671 (FLLAAPIVLILVGPIALLLTG). Topologically, residues 672–684 (SLHQTGQDGSSSL) are vacuolar. Residues 685–705 (FIYIAIVALTTLLLSPMLPFV) traverse the membrane as a helical segment. Residues 706–711 (HRCTYH) lie on the Cytoplasmic side of the membrane. The helical transmembrane segment at 712–732 (IPLFMLAVFAGTLIYNLVAFP) threads the bilayer. Residues 733 to 953 (FSDSNRLKLF…VEGRKSFEIA (221 aa)) are Vacuolar-facing. Asn-779 is a glycosylation site (N-linked (GlcNAc...) asparagine).

This sequence belongs to the peptidase M28 family. Requires Zn(2+) as cofactor.

The protein localises to the vacuole membrane. May be involved in vacuolar sorting and osmoregulation. The polypeptide is Vacuolar membrane protease (Emericella nidulans (strain FGSC A4 / ATCC 38163 / CBS 112.46 / NRRL 194 / M139) (Aspergillus nidulans)).